Consider the following 393-residue polypeptide: MKRVTGFPTRPDMVQQLLNVGFDYYNLPSSDGSHYWSDNVAYEFTLAEIDRIEDTTNELHSMCLDFAADEIKKGDYENYHFTELQKQLIETSWRNQEPYLYGRFDFGYDGNNLKMFEYNADTPTSLLEAAVVQWQWLEQIEGLKHRDQFNWIHEELIKHFQFLKQQSGKTDFHLSAMQDAGREDWGNVDYLADVAYNAGWNIHQLAVEDIGYNSETKKFVDLNDQPIEMLFKLYPLEWLSHAEFARHITTAETRFIEPAWKMLLSNKALLAKLWARYPNHPHLLPAYFTPFELPKDLSMWVKKPLLGREGANVFYYEKNNGVEFAAKGSEHSTFYGNSGYVYQQKFELPSFDGMYPIIGSWVVGDVACGMGLREDFTAVTGNDSHFIPHYFVP.

Residue 103-105 (RFD) coordinates ATP. Positions 105, 117, and 119 each coordinate Mg(2+). Residues Lys267, Lys303, Gly310, Gln343, and 378–380 (AVT) contribute to the ATP site.

It belongs to the glutathionylspermidine synthase preATP-grasp family.

In terms of biological role, may be a ligase forming an amide bond. Shows ATPase activity. In Haemophilus influenzae (strain ATCC 51907 / DSM 11121 / KW20 / Rd), this protein is Putative acid--amine ligase HI_0929.